Reading from the N-terminus, the 266-residue chain is Mitochondrial intermembrane space import and assembly protein 40 (266 aa).

Residues 1–28 (MFRQVSVRALRRAAGRSVCASRAQMVRH) constitute a mitochondrion transit peptide. Residues 29–44 (SSTLGGGKGSYNLDMP) are Mitochondrial matrix-facing. A helical; Signal-anchor for type II membrane protein transmembrane segment spans residues 45–61 (ALALAAGVTLLAGYMVY). The Mitochondrial intermembrane segment spans residues 62 to 266 (PRAPKAKQAA…AESAKSDEGH (205 aa)). Positions 87 to 98 (ASLQASAPVQAT) are enriched in polar residues. The tract at residues 87 to 180 (ASLQASAPVQ…GQQGAYNPDT (94 aa)) is disordered. Composition is skewed to low complexity over residues 130 to 157 (AEVGETQAEQAPAVETEQAAEAEQAAEA) and 165 to 175 (AGEAAQGQQGA). Intrachain disulfides connect C187-C189, C198-C231, and C208-C221. The 45-residue stretch at 195 to 239 (HGPCGEEFKAAFACFVYSEAEPKGIDCVEKFQVMQDCFRQHPEHY) folds into the CHCH domain. 2 short sequence motifs (cx9C motif) span residues 198-208 (CGEEFKAAFAC) and 221-231 (CVEKFQVMQDC). The interval 242 to 266 (QLESEEQAVRETEAAAESAKSDEGH) is disordered. The segment covering 248 to 266 (QAVRETEAAAESAKSDEGH) has biased composition (basic and acidic residues).

In terms of assembly, monomer. It depends on Cu(2+) as a cofactor. The cofactor is Zn(2+).

The protein resides in the mitochondrion inner membrane. Required for the import and folding of small cysteine-containing proteins (small Tim) in the mitochondrial intermembrane space (IMS). Forms a redox cycle with ERV1 that involves a disulfide relay system. Precursor proteins to be imported into the IMS are translocated in their reduced form into the mitochondria. The oxidized form of MIA40 forms a transient intermolecular disulfide bridge with the reduced precursor protein, resulting in oxidation of the precursor protein that now contains an intramolecular disulfide bond and is able to undergo folding in the IMS. This Eremothecium gossypii (strain ATCC 10895 / CBS 109.51 / FGSC 9923 / NRRL Y-1056) (Yeast) protein is Mitochondrial intermembrane space import and assembly protein 40 (MIA40).